Here is a 108-residue protein sequence, read N- to C-terminus: UPF0145 protein Acel_2109 (108 aa).

This sequence belongs to the UPF0145 family.

The chain is UPF0145 protein Acel_2109 from Acidothermus cellulolyticus (strain ATCC 43068 / DSM 8971 / 11B).